The chain runs to 399 residues: Phosphoglycerate kinase (399 aa).

Substrate is bound by residues 22 to 24, Arg-38, 61 to 64, Arg-120, and Arg-153; these read DFN and HLGR. ATP-binding positions include Lys-206, Gly-297, Glu-328, and 354–357; that span reads GGDT.

This sequence belongs to the phosphoglycerate kinase family. As to quaternary structure, monomer.

Its subcellular location is the cytoplasm. The catalysed reaction is (2R)-3-phosphoglycerate + ATP = (2R)-3-phospho-glyceroyl phosphate + ADP. It participates in carbohydrate degradation; glycolysis; pyruvate from D-glyceraldehyde 3-phosphate: step 2/5. The protein is Phosphoglycerate kinase of Campylobacter concisus (strain 13826).